Here is a 605-residue protein sequence, read N- to C-terminus: Xylan O-acetyltransferase 7 (605 aa).

Topologically, residues M1 to P124 are cytoplasmic. Residues P86–P126 are disordered. A helical; Signal-anchor for type II membrane protein membrane pass occupies residues G125–I145. The Lumenal portion of the chain corresponds to N146–A605. 2 N-linked (GlcNAc...) asparagine glycosylation sites follow: N192 and N218. Disulfide bonds link C243-C296, C267-C332, C276-C584, and C499-C580. The short motif at G319 to S321 is the GDS motif element. S321 (nucleophile) is an active-site residue. N-linked (GlcNAc...) asparagine glycosylation is found at N351, N363, N471, and N508. The active-site Proton donor is the D579. Residues D579 to H582 carry the DXXH motif motif. The Proton acceptor role is filled by H582.

It belongs to the PC-esterase family. TBL subfamily. In terms of tissue distribution, expressed in roots, leaves and stems.

It is found in the golgi apparatus membrane. In terms of biological role, xylan acetyltransferase required for 2-O- and 3-O-monoacetylation of xylosyl residues in xylan. Catalyzes the 2-O-acetylation of xylan, followed by nonenzymatic acetyl migration to the O-3 position, resulting in products that are monoacetylated at both O-2 and O-3 positions. This chain is Xylan O-acetyltransferase 7, found in Oryza sativa subsp. japonica (Rice).